We begin with the raw amino-acid sequence, 146 residues long: Snake venom vascular endothelial growth factor toxin (146 aa).

The first 24 residues, Met1–Gly24, serve as a signal peptide directing secretion. Position 25 is a pyrrolidone carboxylic acid (Gln25). Disulfide bonds link Cys38-Cys80, Cys69-Cys115, and Cys73-Cys117. A disordered region spans residues Pro119–Val146. The segment covering Asn133–Val146 has biased composition (basic and acidic residues).

It belongs to the PDGF/VEGF growth factor family. Snake venom VEGF subfamily. Homodimer; disulfide-linked. Interacts with VEGF receptor-1 (FLT1) with a high affinity, whereas it binds to VEGF receptor-2 (KDR) with a low affinity. Does not bind VEGF receptor-3 (FLT4). As to expression, expressed by the venom gland.

The protein resides in the secreted. Its function is as follows. Snake venom VEGFs may contribute to venom dispersion and prey subjugation by inducing vascular permeability and hypotension. This protein induces vascular permeability probably through VEGF (VEGFR) signaling. This protein also induces a drastic hypotensive effect after intravenous injection. The hypotension is mediated by nitric oxide (NO), which is produced by VEGF-activated endothelium NO synthase. Also induces angiogenesis in vitro. Like other crotalid VEGFs, this protein interacts with VEGF receptor-1 (FLT1) with a high affinity, whereas it binds to VEGF receptor-2 (KDR) with a low affinity. This Bothrops insularis (Golden lancehead) protein is Snake venom vascular endothelial growth factor toxin.